The following is a 318-amino-acid chain: MPNIVLFSGSSHQDLSQKVAERLGLELGKVVTKKFSNQETSVEIGESVRGEDVYIIQSGCGEINDNLMELLIMINACKIASSSRVTAVIPCFPYARQDKKDKSRAPISAKLVANMLSVAGADHIITMDLHASQIQGFFDIPVDNLYAEPAVLQWIRENIPEWKNSSIVSPDAGGAKRVTSIADRLNVEFALIHKERKKANEVDRMVLVGDVKDRVAILVDDMADTCGTVCHAADKLLSAGATKVYAILTHGIFSGPAISRINNAAFEAVVVTNTIPQDEKMKQCSKIQVIDISMILAEAIRRTHNGESVSYLFSHVPL.

96–101 serves as a coordination point for ATP; that stretch reads RQDKKD. Mg(2+) contacts are provided by Asp128, His130, Asp139, and Asp143. Position 130 (His130) interacts with ATP. The tract at residues 212–227 is binding of phosphoribosylpyrophosphate; the sequence is KDRVAILVDDMADTCG.

Belongs to the ribose-phosphate pyrophosphokinase family. Homodimer. The active form is probably a hexamer composed of 3 homodimers. Mg(2+) is required as a cofactor.

It catalyses the reaction D-ribose 5-phosphate + ATP = 5-phospho-alpha-D-ribose 1-diphosphate + AMP + H(+). The protein operates within metabolic intermediate biosynthesis; 5-phospho-alpha-D-ribose 1-diphosphate biosynthesis; 5-phospho-alpha-D-ribose 1-diphosphate from D-ribose 5-phosphate (route I): step 1/1. Activated by magnesium and inorganic phosphate. Competitively or non-competitively inhibited by ADP, 2,3-bisphosphoglyceride or GDP. Functionally, catalyzes the synthesis of phosphoribosylpyrophosphate (PRPP) that is essential for nucleotide synthesis. This is Ribose-phosphate pyrophosphokinase 2 (prps2) from Xenopus laevis (African clawed frog).